We begin with the raw amino-acid sequence, 331 residues long: MDYSTVKQEEVEVVVLDGEEEAAAAAAPVPLPAAMGVGAAVAPFLVKTFEMVEDPATDAVVSWGGAARNSFVVWDPHAFAAGLLPLHFKHANFSSFLRQLNTYGFRKVSADRWEFANEDFLGGQRHLLANIRRRRRGAGTGSTTPRAVNCGGGGGEGEVERLRRDKEALARELARLRRQQQEARAQLLDMERRVRGTERRQEQCTEFLARALRSPDVLDNIARRHAAAVERKKRRMLAAAADDDGLTFEALALAAAADTSHSTGGAVTTDMIWYELLGEEQAEIDIEVDQLVASASAAADTASEAEPWEEMGEEEVQELVQQIDCLASPSS.

A disordered region spans residues 135–160; it reads RRGAGTGSTTPRAVNCGGGGGEGEVE. Residues 156 to 238 are a coiled coil; sequence EGEVERLRRD…VERKKRRMLA (83 aa). The interval 162-212 is hydrophobic repeat HR-A/B; it reads LRRDKEALARELARLRRQQQEARAQLLDMERRVRGTERRQEQCTEFLARAL. The short motif at 230-235 is the Nuclear localization signal element; the sequence is ERKKRR. The short motif at 246 to 253 is the Nuclear export signal element; the sequence is LTFEALAL. The AHA1 signature appears at 270–279; that stretch reads DMIWYELLGE. The AHA2 signature appears at 305–313; the sequence is AEPWEEMGE.

It belongs to the HSF family. Class A subfamily. In terms of assembly, homotrimer. Post-translationally, exhibits temperature-dependent phosphorylation.

It localises to the cytoplasm. It is found in the nucleus. Functionally, transcriptional regulator that specifically binds DNA of heat shock promoter elements (HSE). The protein is Putative heat stress transcription factor A-6a (HSFA6A) of Oryza sativa subsp. japonica (Rice).